A 198-amino-acid chain; its full sequence is GTP-binding protein RHO1 (198 aa).

Position 16-23 (16-23) interacts with GTP; sequence GDGACGKT. The short motif at 38 to 46 is the Effector region element; sequence YVPTVFENY. Residues 63–67 and 121–124 each bind GTP; these read DTAGQ and CKSD. Cys-195 is subject to Cysteine methyl ester. Cys-195 carries the S-geranylgeranyl cysteine lipid modification. The propeptide at 196-198 is removed in mature form; that stretch reads VVL.

Belongs to the small GTPase superfamily. Rho family.

It is found in the cell membrane. The polypeptide is GTP-binding protein RHO1 (RHO1) (Candida albicans (strain SC5314 / ATCC MYA-2876) (Yeast)).